The sequence spans 338 residues: Ankyrin-repeat domain containing transcription coregulator asaA (338 aa).

Basic and acidic residues predominate over residues 1 to 10; that stretch reads MGAPHEEIQA. Disordered regions lie at residues 1-70 and 112-137; these read MGAP…LRST and ASSV…PFID. Basic residues predominate over residues 11 to 33; the sequence is LKRRREQNRLAQRRRRDNVRRRL. Polar residues predominate over residues 42 to 70; sequence SPASASQTSLCSSTDSRVTLNPHQSLRST. Positions 112 to 130 are enriched in low complexity; sequence ASSVSPSSSAGPLSSSPSP. ANK repeat units follow at residues 235-264, 268-297, and 301-330; these read RWTT…DPNA, EGAT…DPTL, and AGWL…PVDY.

Its pathway is secondary metabolite biosynthesis. Functionally, transcription coregulator involved in regulation of gene cluster that mediates the biosynthesis of aspergillic acid, a hydroxamic acid-containing pyrazinone with aliphatic side chains that originates from leucine (Leu) and isoleucine (Ile). Aspergillic acid has antibiotic properties and was shown to be lethal to mice. The sequence is that of Ankyrin-repeat domain containing transcription coregulator asaA from Aspergillus flavus (strain ATCC 200026 / FGSC A1120 / IAM 13836 / NRRL 3357 / JCM 12722 / SRRC 167).